Here is a 431-residue protein sequence, read N- to C-terminus: Gamma-glutamyl phosphate reductase (431 aa).

Belongs to the gamma-glutamyl phosphate reductase family.

It is found in the cytoplasm. It carries out the reaction L-glutamate 5-semialdehyde + phosphate + NADP(+) = L-glutamyl 5-phosphate + NADPH + H(+). The protein operates within amino-acid biosynthesis; L-proline biosynthesis; L-glutamate 5-semialdehyde from L-glutamate: step 2/2. Functionally, catalyzes the NADPH-dependent reduction of L-glutamate 5-phosphate into L-glutamate 5-semialdehyde and phosphate. The product spontaneously undergoes cyclization to form 1-pyrroline-5-carboxylate. The chain is Gamma-glutamyl phosphate reductase from Acetivibrio thermocellus (strain ATCC 27405 / DSM 1237 / JCM 9322 / NBRC 103400 / NCIMB 10682 / NRRL B-4536 / VPI 7372) (Clostridium thermocellum).